A 348-amino-acid chain; its full sequence is Anthranilate phosphoribosyltransferase (348 aa).

5-phospho-alpha-D-ribose 1-diphosphate-binding positions include G89, 92-93 (GD), T97, 99-102 (NIST), 117-125 (KHGNRSVSS), and S129. Position 89 (G89) interacts with anthranilate. S101 provides a ligand contact to Mg(2+). N120 provides a ligand contact to anthranilate. R175 lines the anthranilate pocket. Mg(2+) contacts are provided by D233 and E234.

It belongs to the anthranilate phosphoribosyltransferase family. Homodimer. Requires Mg(2+) as cofactor.

It catalyses the reaction N-(5-phospho-beta-D-ribosyl)anthranilate + diphosphate = 5-phospho-alpha-D-ribose 1-diphosphate + anthranilate. It participates in amino-acid biosynthesis; L-tryptophan biosynthesis; L-tryptophan from chorismate: step 2/5. In terms of biological role, catalyzes the transfer of the phosphoribosyl group of 5-phosphorylribose-1-pyrophosphate (PRPP) to anthranilate to yield N-(5'-phosphoribosyl)-anthranilate (PRA). In Shewanella sp. (strain W3-18-1), this protein is Anthranilate phosphoribosyltransferase.